A 348-amino-acid chain; its full sequence is Quinone oxidoreductase-like protein 1 (348 aa).

The protein belongs to the zinc-containing alcohol dehydrogenase family. Quinone oxidoreductase subfamily. Component of the FERRY complex composed of five subunits, TBCK, PPP1R21, FERRY3, CRYZL1 and GATD1 with a ratio of 1:2:1:2:4, respectively.

The protein localises to the early endosome. Functionally, component of the FERRY complex (Five-subunit Endosomal Rab5 and RNA/ribosome intermediary). The FERRY complex directly interacts with mRNAs and RAB5A, and functions as a RAB5A effector involved in the localization and the distribution of specific mRNAs most likely by mediating their endosomal transport. The complex recruits mRNAs and ribosomes to early endosomes through direct mRNA-interaction. This is Quinone oxidoreductase-like protein 1 (Cryzl1) from Mus musculus (Mouse).